The primary structure comprises 766 residues: Probable serine/threonine-protein kinase KKQ8 (766 aa).

Disordered regions lie at residues 1–165 (MPEH…DTSS), 201–240 (GHYA…AAQL), 277–297 (SDAN…LDLP), 362–384 (TRSH…DDPS), and 417–437 (AAKN…AGVQ). A compositionally biased stretch (low complexity) spans 14 to 25 (RSLSLGSSMRSL). Residues 49–64 (VDIRVDTASASREHTP) are compositionally biased toward basic and acidic residues. Residues 94–120 (LTPTNSNPQSKSGSPVSQNTSQESLIT) are compositionally biased toward polar residues. A compositionally biased stretch (basic and acidic residues) spans 127 to 137 (EDYRPSKDSRR). 2 stretches are compositionally biased toward polar residues: residues 140–165 (RNAS…DTSS) and 214–223 (PTSSRVPSRS). The span at 288–297 (SKNDGHLDLP) shows a compositional bias: basic and acidic residues. Residues 372–382 (DSSDDDEELDD) are compositionally biased toward acidic residues. Positions 419-430 (KNKHNQSSKHRT) are enriched in basic residues. A Protein kinase domain is found at 449–752 (GKCVAVVGHG…IDKLLQTGWM (304 aa)). Residues 455-463 (VGHGAYGVV) and K493 contribute to the ATP site. D603 acts as the Proton acceptor in catalysis.

Belongs to the protein kinase superfamily. CAMK Ser/Thr protein kinase family. NPR/HAL subfamily. HAL5 sub-subfamily.

The protein localises to the cytoplasm. It carries out the reaction L-seryl-[protein] + ATP = O-phospho-L-seryl-[protein] + ADP + H(+). It catalyses the reaction L-threonyl-[protein] + ATP = O-phospho-L-threonyl-[protein] + ADP + H(+). This is Probable serine/threonine-protein kinase KKQ8 (KKQ8) from Candida glabrata (strain ATCC 2001 / BCRC 20586 / JCM 3761 / NBRC 0622 / NRRL Y-65 / CBS 138) (Yeast).